The following is a 218-amino-acid chain: N-(5'-phosphoribosyl)anthranilate isomerase (218 aa).

It belongs to the TrpF family.

It catalyses the reaction N-(5-phospho-beta-D-ribosyl)anthranilate = 1-(2-carboxyphenylamino)-1-deoxy-D-ribulose 5-phosphate. Its pathway is amino-acid biosynthesis; L-tryptophan biosynthesis; L-tryptophan from chorismate: step 3/5. In Bordetella parapertussis (strain 12822 / ATCC BAA-587 / NCTC 13253), this protein is N-(5'-phosphoribosyl)anthranilate isomerase.